The chain runs to 351 residues: Synaptonemal complex central element protein 1 (351 aa).

The segment covering 1-10 (MAGRSLTSKA) has biased composition (polar residues). 2 disordered regions span residues 1-31 (MAGR…TSSQ) and 267-351 (KCQQ…KELF). Positions 52-290 (RVEVLINRIN…ELEKHGMQVP (239 aa)) form a coiled coil.

It belongs to the SYCE family. Homodimer. Found in a complex with SYCP1 and SYCE2. Interacts with SYCP1, SYCE2 and SYCE3. Interacts with SIX6OS1.

The protein resides in the nucleus. It localises to the chromosome. Major component of the transverse central element of synaptonemal complexes (SCS), formed between homologous chromosomes during meiotic prophase. Requires SYCP1 in order to be incorporated into the central element. May have a role in the synaptonemal complex assembly, stabilization and recombination. In Homo sapiens (Human), this protein is Synaptonemal complex central element protein 1 (SYCE1).